The primary structure comprises 240 residues: Flagellar L-ring protein (240 aa).

The first 20 residues, 1-20, serve as a signal peptide directing secretion; it reads MIRNFLLFFMPIYAILFLSG. Cys21 is lipidated: N-palmitoyl cysteine. Cys21 carries S-diacylglycerol cysteine lipidation.

The protein belongs to the FlgH family. The basal body constitutes a major portion of the flagellar organelle and consists of four rings (L,P,S, and M) mounted on a central rod.

The protein localises to the cell outer membrane. The protein resides in the bacterial flagellum basal body. Its function is as follows. Assembles around the rod to form the L-ring and probably protects the motor/basal body from shearing forces during rotation. The polypeptide is Flagellar L-ring protein (Sulfurimonas denitrificans (strain ATCC 33889 / DSM 1251) (Thiomicrospira denitrificans (strain ATCC 33889 / DSM 1251))).